We begin with the raw amino-acid sequence, 100 residues long: Small ribosomal subunit protein uS14c (100 aa).

Belongs to the universal ribosomal protein uS14 family. As to quaternary structure, part of the 30S ribosomal subunit.

It is found in the plastid. It localises to the chloroplast. Functionally, binds 16S rRNA, required for the assembly of 30S particles. This Citrus sinensis (Sweet orange) protein is Small ribosomal subunit protein uS14c.